A 266-amino-acid chain; its full sequence is Vitamin B12-binding protein (266 aa).

Positions 1-22 are cleaved as a signal peptide; it reads MAKSLFRALVALSFLAPLWLNA. Residues 25–266 form the Fe/B12 periplasmic-binding domain; it reads RVITLSPANT…QLCNALSQVD (242 aa). Residues Y50 and 242 to 246 each bind cyanocob(III)alamin; that span reads DWFER. C183 and C259 are disulfide-bonded.

This sequence belongs to the BtuF family. In terms of assembly, the complex is composed of two ATP-binding proteins (BtuD), two transmembrane proteins (BtuC) and a solute-binding protein (BtuF).

Its subcellular location is the periplasm. Its function is as follows. Part of the ABC transporter complex BtuCDF involved in vitamin B12 import. Binds vitamin B12 and delivers it to the periplasmic surface of BtuC. This Escherichia coli (strain K12) protein is Vitamin B12-binding protein (btuF).